The sequence spans 393 residues: S-adenosylmethionine synthase (393 aa).

Glu-9 contributes to the Mg(2+) binding site. His-15 serves as a coordination point for ATP. Glu-43 contacts K(+). Residues Glu-56 and Gln-99 each coordinate L-methionine. Residues 167–169, 235–238, Asp-246, 252–253, Ala-269, Lys-273, and Lys-277 each bind ATP; these read DGK, SGRF, and RK. Residue Asp-246 coordinates L-methionine. Lys-277 is a binding site for L-methionine.

This sequence belongs to the AdoMet synthase family. As to quaternary structure, homotetramer. Mn(2+) is required as a cofactor. Requires Mg(2+) as cofactor. It depends on Co(2+) as a cofactor. K(+) serves as cofactor.

The protein resides in the cytoplasm. It carries out the reaction L-methionine + ATP + H2O = S-adenosyl-L-methionine + phosphate + diphosphate. It functions in the pathway amino-acid biosynthesis; S-adenosyl-L-methionine biosynthesis; S-adenosyl-L-methionine from L-methionine: step 1/1. In terms of biological role, catalyzes the formation of S-adenosylmethionine from methionine and ATP. The reaction comprises two steps that are both catalyzed by the same enzyme: formation of S-adenosylmethionine (AdoMet) and triphosphate, and subsequent hydrolysis of the triphosphate. This is S-adenosylmethionine synthase (SAMS) from Gossypium hirsutum (Upland cotton).